The sequence spans 152 residues: Arginine repressor (152 aa).

Belongs to the ArgR family.

It is found in the cytoplasm. It functions in the pathway amino-acid biosynthesis; L-arginine biosynthesis [regulation]. In terms of biological role, regulates arginine biosynthesis genes. This chain is Arginine repressor, found in Thermotoga sp. (strain RQ2).